Here is a 558-residue protein sequence, read N- to C-terminus: Putative ABC transporter ATP-binding protein gbs1680 (558 aa).

2 ABC transporter domains span residues 5–246 (IEWK…GIRE) and 295–527 (LSVQ…THLK). ATP is bound by residues 39–46 (GPSGSGKS) and 328–335 (GKNGAGKS).

It belongs to the ABC transporter superfamily.

The protein localises to the cell membrane. Probably part of an ABC transporter complex. Responsible for energy coupling to the transport system. The protein is Putative ABC transporter ATP-binding protein gbs1680 of Streptococcus agalactiae serotype III (strain NEM316).